Consider the following 147-residue polypeptide: Lysozyme C-1 (147 aa).

Positions 1 to 18 (MKALIILGLLCLSVAVQG) are cleaved as a signal peptide. Positions 19 to 147 (KVFERCELAR…VSSYVEGCSL (129 aa)) constitute a C-type lysozyme domain. Cystine bridges form between Cys24/Cys145, Cys48/Cys133, Cys83/Cys99, and Cys95/Cys113. Residues Glu53 and Asp71 contribute to the active site.

This sequence belongs to the glycosyl hydrolase 22 family. Monomer. Expressed in stomach.

Its subcellular location is the secreted. It carries out the reaction Hydrolysis of (1-&gt;4)-beta-linkages between N-acetylmuramic acid and N-acetyl-D-glucosamine residues in a peptidoglycan and between N-acetyl-D-glucosamine residues in chitodextrins.. In terms of biological role, lysozymes have primarily a bacteriolytic function; those in tissues and body fluids are associated with the monocyte-macrophage system and enhance the activity of immunoagents. The protein is Lysozyme C-1 of Ovis aries (Sheep).